The following is a 643-amino-acid chain: Alpha-dioxygenase PIOX (643 aa).

Residue histidine 167 is the Proton acceptor of the active site. Ca(2+) is bound at residue aspartate 168. Position 172 (histidine 172) interacts with heme b. The Ca(2+) site is built by threonine 220, tryptophan 222, aspartate 224, and serine 226. The heme b site is built by histidine 392, arginine 489, and arginine 493.

The protein belongs to the peroxidase family. Heme b serves as cofactor. Requires Ca(2+) as cofactor.

The enzyme catalyses a 1,2-saturated fatty acid + O2 = a (2R)-2-hydroperoxy fatty acid. It catalyses the reaction (9Z,12Z,15Z)-octadecatrienoate + O2 = (R)-2-hydroperoxy-(9Z,12Z,15Z)-octadecatrienoate. It carries out the reaction (9Z,12Z)-octadecadienoate + O2 = (2R,9Z,12Z)-2-hydroperoxyoctadecadienoate. In terms of biological role, alpha-dioxygenase that catalyzes the primary oxygenation step of a variety of 14-20 carbon fatty acids, containing up to three unsaturated bonds, into their corresponding 2R-hydroperoxides. Involved in the production of oxylipins that function in cell signaling, wound healing, and protection from infection. The protein is Alpha-dioxygenase PIOX of Nicotiana tabacum (Common tobacco).